Consider the following 86-residue polypeptide: Toxin Td8 (86 aa).

The N-terminal stretch at 1–20 is a signal peptide; the sequence is MTRFVLFLSCFFLIGMVVEC. An LCN-type CS-alpha/beta domain is found at 21–83; it reads KDGYLVGDDG…IWNSATNRCR (63 aa). 4 cysteine pairs are disulfide-bonded: cysteine 31–cysteine 82, cysteine 35–cysteine 57, cysteine 43–cysteine 63, and cysteine 47–cysteine 65. Arginine 83 is modified (arginine amide).

As to expression, expressed by the venom gland.

The protein localises to the secreted. In terms of biological role, beta toxins bind voltage-independently at site-4 of sodium channels (Nav) and shift the voltage of activation toward more negative potentials thereby affecting sodium channel activation and promoting spontaneous and repetitive firing. This is Toxin Td8 from Tityus discrepans (Venezuelan scorpion).